We begin with the raw amino-acid sequence, 127 residues long: MNIRNSLILIISTILFFSIINGSLSLDPTCVGAPDGQVYLFSSWDFKGDRYVYNVSQGYLSLSDGFRGNVQSFISGADVCFVKWYPIEQYQITAGESHRNYAALTNFGQRMDAIIPGNCSNIVCSPK.

The N-terminal stretch at 1–25 is a signal peptide; that stretch reads MNIRNSLILIISTILFFSIINGSLS. Residues N54 and N118 are each glycosylated (N-linked (GlcNAc...) asparagine).

It belongs to the Dictyostelium gerABC family.

The protein localises to the secreted. The sequence is that of Spore germination protein 2 (gerB) from Dictyostelium discoideum (Social amoeba).